Consider the following 305-residue polypeptide: Translation initiation factor eIF2B subunit alpha (305 aa).

This sequence belongs to the eIF-2B alpha/beta/delta subunits family. In terms of assembly, component of the translation initiation factor 2B (eIF2B) complex which is a heterodecamer of two sets of five different subunits: alpha, beta, gamma, delta and epsilon. Subunits alpha, beta and delta comprise a regulatory subcomplex and subunits epsilon and gamma comprise a catalytic subcomplex. Within the complex, the hexameric regulatory complex resides at the center, with the two heterodimeric catalytic subcomplexes bound on opposite sides.

It localises to the cytoplasm. The protein localises to the cytosol. Functionally, acts as a component of the translation initiation factor 2B (eIF2B) complex, which catalyzes the exchange of GDP for GTP on eukaryotic initiation factor 2 (eIF2) gamma subunit. Its guanine nucleotide exchange factor activity is repressed when bound to eIF2 complex phosphorylated on the alpha subunit, thereby limiting the amount of methionyl-initiator methionine tRNA available to the ribosome and consequently global translation is repressed. This is Translation initiation factor eIF2B subunit alpha from Caenorhabditis elegans.